Reading from the N-terminus, the 215-residue chain is S-crystallin 2 (215 aa).

Positions 2–80 (PSYTLHYFNH…YLAREFGFHG (79 aa)) constitute a GST N-terminal domain. Residues 82-215 (NNLDMARVDF…YLKSRSSTDF (134 aa)) form the GST C-terminal domain.

Belongs to the GST superfamily. As to expression, lens.

In terms of biological role, S-crystallins are structural components of squids and octopi eye lens. Contains relatively little GST activity (1/1000 of that of mammalian GST enzyme). In Octopus vulgaris (Common octopus), this protein is S-crystallin 2 (OCTS2).